The primary structure comprises 445 residues: MALVDKHKVKRQRLDRICEGIRPQIMNGPLHPRPLVALLDGRDCTVEMPILKDLATVAFCDAQSTQEIHEKVLNEAVGAMMYHTITLTREDLEKFKALRVIVRIGSGYDNVDIKAAGELGIAVCNIPSAAVEETADSTICHILNLYRRNTWLYQALREGTRVQSVEQIREVASGAARIRGETLGLIGFGRTGQAVAVRAKAFGFSVLFYDPYLQDGTERSLGVQRVYTLQDLLYQSDCVSLHCNLNEHNHHLINDFTIKQMRQGAFLVNAARGGLVDEKALAQALKEGRIRGAALDVHESEPFSFAQGPLKDAPNLICTPHTAWYSEQASLEMREAAATEIRRAITGRIPESLRNCVNKEFFVTTAPWSVIDQQAIHPELNGATYRYPPGIVGVAPGGLPAAMEGIIPGGIPVTHNLPTVAHPSQAPSPNQPTKHGDNREHPNEQ.

Asymmetric dimethylarginine is present on arginine 22. NAD(+)-binding positions include serine 106, 186 to 191, aspartate 210, 243 to 249, 270 to 272, and aspartate 296; these read IGFGRT, CNLNEHN, and AAR. The active site involves arginine 272. Glutamate 301 is an active-site residue. The Proton donor role is filled by histidine 321. 321 to 324 is an NAD(+) binding site; the sequence is HTAW. The segment at 414 to 445 is disordered; that stretch reads THNLPTVAHPSQAPSPNQPTKHGDNREHPNEQ. At serine 428 the chain carries Phosphoserine. The span at 434–445 shows a compositional bias: basic and acidic residues; the sequence is KHGDNREHPNEQ.

It belongs to the D-isomer specific 2-hydroxyacid dehydrogenase family. As to quaternary structure, interacts with the C-terminus of adenovirus E1A protein. Can form homodimers or heterodimers of CTBP1 and CTBP2. Interacts with HIPK2. Interacts with ZNF217, PNN, NRIP1 and WIZ. Interacts with PRDM16; represses white adipose tissue (WAT)-specific genes expression. Interacts with MCRIP1. Isoform 2 is specifically localized in synaptic ribbon (at protein level).

The protein localises to the nucleus. It is found in the synapse. Its function is as follows. Corepressor targeting diverse transcription regulators. Functions in brown adipose tissue (BAT) differentiation. Isoform 2 probably acts as a scaffold for specialized synapses. The protein is C-terminal-binding protein 2 (CTBP2) of Bos taurus (Bovine).